The chain runs to 338 residues: NAD kinase (338 aa).

The active-site Proton acceptor is the aspartate 66. Residues 66–67, arginine 71, 141–142, lysine 152, aspartate 171, 182–187, and alanine 206 each bind NAD(+); these read DG, ND, and TAYAFS. Residues 317–338 form a disordered region; that stretch reads GDAGVAGTEPDKPGERDGKAGA. Positions 325–338 are enriched in basic and acidic residues; the sequence is EPDKPGERDGKAGA.

This sequence belongs to the NAD kinase family. A divalent metal cation serves as cofactor.

The protein resides in the cytoplasm. It carries out the reaction NAD(+) + ATP = ADP + NADP(+) + H(+). Its function is as follows. Involved in the regulation of the intracellular balance of NAD and NADP, and is a key enzyme in the biosynthesis of NADP. Catalyzes specifically the phosphorylation on 2'-hydroxyl of the adenosine moiety of NAD to yield NADP. The sequence is that of NAD kinase from Bifidobacterium longum subsp. infantis (strain ATCC 15697 / DSM 20088 / JCM 1222 / NCTC 11817 / S12).